Reading from the N-terminus, the 512-residue chain is Glucagon-like peptide 2 receptor (512 aa).

Over 1–135 the chain is Extracellular; the sequence is MRRLWGPGTP…KQNVDHYHHT (135 aa). Intrachain disulfides connect Cys-43/Cys-65, Cys-56/Cys-97, and Cys-78/Cys-119. Asn-73 carries N-linked (GlcNAc...) asparagine glycosylation. The chain crosses the membrane as a helical span at residues 136 to 160; it reads LLSTLQLMYTVGYSLSLISLFLALT. Residues 161-172 are Cytoplasmic-facing; it reads LFLFLRKLHCTR. A helical membrane pass occupies residues 173–197; sequence NYIHMNLFASFILRALVVLVKDMVF. At 198–223 the chain is on the extracellular side; sequence YNSYSRRPDSESGWMSYLSEISASCR. The chain crosses the membrane as a helical span at residues 224 to 247; it reads SVQVLLHYFVGTNHLWLLVEGLYL. Over 248–261 the chain is Cytoplasmic; sequence HALLEPTVLPERRL. The helical transmembrane segment at 262 to 283 threads the bilayer; that stretch reads WPKYLVVGWAFPMLFVIPWIFV. Over 284–301 the chain is Extracellular; that stretch reads RASLENTGCWAVNENKKI. A helical membrane pass occupies residues 302–324; that stretch reads WWIIRGPILLCVTVNFFIFLKIL. Topologically, residues 325-348 are cytoplasmic; it reads KLLISKFRAHQMCFRDYKYRLAKS. Residues 349–367 traverse the membrane as a helical segment; sequence TLLLILLMGVHEFLFTFFT. Over 368 to 379 the chain is Extracellular; it reads DDQVQGFSRLIR. A helical transmembrane segment spans residues 380–400; sequence LFIQLTLSSFHGFLVALQYGF. The Cytoplasmic portion of the chain corresponds to 401–512; it reads ASREVKAELR…MEEILEESEI (112 aa). Residues 458-494 form a disordered region; it reads SGVSSHLTAGNLRDHGAQPHRGRGAWPRASSLSESSE.

The protein belongs to the G-protein coupled receptor 2 family.

The protein resides in the cell membrane. In terms of biological role, this is a receptor for glucagon-like peptide 2. The activity of this receptor is mediated by G proteins which activate adenylyl cyclase. This Mus musculus (Mouse) protein is Glucagon-like peptide 2 receptor (Glp2r).